Reading from the N-terminus, the 244-residue chain is Mediator of RNA polymerase II transcription subunit 19 (244 aa).

2 disordered regions span residues 1-56 (MENF…PGAD) and 171-244 (PKKK…SSLR). Positions 26–47 (GKPPPPPPPPAGGGPGTAPPPT) are enriched in pro residues. Over residues 171–182 (PKKKNKHKHKQS) the composition is skewed to basic residues. Serine 194 is subject to Phosphoserine. Residues 212 to 224 (KRKKKEKKKKKNR) are compositionally biased toward basic residues. At serine 226 the chain carries Phosphoserine. The segment covering 234–244 (SSQASSSSSLR) has biased composition (low complexity).

It belongs to the Mediator complex subunit 19 family. As to quaternary structure, component of the Mediator complex, which is composed of MED1, MED4, MED6, MED7, MED8, MED9, MED10, MED11, MED12, MED13, MED13L, MED14, MED15, MED16, MED17, MED18, MED19, MED20, MED21, MED22, MED23, MED24, MED25, MED26, MED27, MED29, MED30, MED31, CCNC, CDK8 and CDC2L6/CDK11. The MED12, MED13, CCNC and CDK8 subunits form a distinct module termed the CDK8 module. Mediator containing the CDK8 module is less active than Mediator lacking this module in supporting transcriptional activation. Individual preparations of the Mediator complex lacking one or more distinct subunits have been variously termed ARC, CRSP, DRIP, PC2, SMCC and TRAP.

The protein localises to the nucleus. Component of the Mediator complex, a coactivator involved in the regulated transcription of nearly all RNA polymerase II-dependent genes. Mediator functions as a bridge to convey information from gene-specific regulatory proteins to the basal RNA polymerase II transcription machinery. Mediator is recruited to promoters by direct interactions with regulatory proteins and serves as a scaffold for the assembly of a functional preinitiation complex with RNA polymerase II and the general transcription factors. The chain is Mediator of RNA polymerase II transcription subunit 19 (MED19) from Homo sapiens (Human).